A 424-amino-acid chain; its full sequence is GTPase Obg (424 aa).

Residues 1–158 (MFIDTAKILV…RMINLEIKLL (158 aa)) form the Obg domain. Residues 159–331 (ADVGLIGFPN…LIKEVTRQLS (173 aa)) form the OBG-type G domain. Residues 165 to 172 (GFPNVGKS), 190 to 194 (FTTLK), 212 to 215 (DIPG), 282 to 285 (NKID), and 312 to 314 (SAA) contribute to the GTP site. Mg(2+)-binding residues include serine 172 and threonine 192. The region spanning 345-424 (RFMPEEKRFT…LNDFEFDFLL (80 aa)) is the OCT domain.

This sequence belongs to the TRAFAC class OBG-HflX-like GTPase superfamily. OBG GTPase family. As to quaternary structure, monomer. Mg(2+) serves as cofactor.

The protein resides in the cytoplasm. In terms of biological role, an essential GTPase which binds GTP, GDP and possibly (p)ppGpp with moderate affinity, with high nucleotide exchange rates and a fairly low GTP hydrolysis rate. Plays a role in control of the cell cycle, stress response, ribosome biogenesis and in those bacteria that undergo differentiation, in morphogenesis control. In Clostridium novyi (strain NT), this protein is GTPase Obg.